Consider the following 813-residue polypeptide: Leucine--tRNA ligase (813 aa).

Positions 41–51 (PYPSGTLHMGH) match the 'HIGH' region motif. Positions 575 to 579 (KMSKS) match the 'KMSKS' region motif. K578 provides a ligand contact to ATP.

It belongs to the class-I aminoacyl-tRNA synthetase family.

The protein localises to the cytoplasm. It catalyses the reaction tRNA(Leu) + L-leucine + ATP = L-leucyl-tRNA(Leu) + AMP + diphosphate. The polypeptide is Leucine--tRNA ligase (Francisella tularensis subsp. tularensis (strain WY96-3418)).